Consider the following 257-residue polypeptide: Putative hydro-lyase Bcen2424_3550 (257 aa).

This sequence belongs to the D-glutamate cyclase family.

The chain is Putative hydro-lyase Bcen2424_3550 from Burkholderia cenocepacia (strain HI2424).